The primary structure comprises 48 residues: Probable antitoxin PhoAT (48 aa).

Belongs to the PhoAT antitoxin family. In terms of assembly, interacts with toxin PhoH2.

Functionally, probable antitoxin component of a type II toxin-antitoxin (TA) system. The probable cognate antitoxin is PhoAT; the toxin gene can be expressed in the absence of the antitoxin gene in M.smegmatis strain mc(2)155. In Mycolicibacterium smegmatis (strain ATCC 700084 / mc(2)155) (Mycobacterium smegmatis), this protein is Probable antitoxin PhoAT.